The following is a 202-amino-acid chain: MSNNPGKLIIFEGTDGAGKSTQIKMLANYLRSKGLDVIASFEPTNGPYGQKIRQLYTDRNKVTRNEELELFLADRREHVNKLINPAISAGKIVLCDRYYLSTAAYQGALGFDVEEILQRNSFAPTPDLALLLQIPVEDGRRRITSSRGEETNDFEKAEMLEKVSTIFNSLSFPYIRHINACQSIDNVQRDIIMQVKQLLKMA.

13-20 (GTDGAGKS) is a binding site for ATP.

This sequence belongs to the thymidylate kinase family.

It carries out the reaction dTMP + ATP = dTDP + ADP. Functionally, phosphorylation of dTMP to form dTDP in both de novo and salvage pathways of dTTP synthesis. The sequence is that of Thymidylate kinase from Desulfotalea psychrophila (strain LSv54 / DSM 12343).